We begin with the raw amino-acid sequence, 198 residues long: Small ribosomal subunit protein uS2 (198 aa).

The protein belongs to the universal ribosomal protein uS2 family.

This chain is Small ribosomal subunit protein uS2, found in Methanobrevibacter smithii (strain ATCC 35061 / DSM 861 / OCM 144 / PS).